We begin with the raw amino-acid sequence, 580 residues long: Anaphase-promoting complex subunit 7 (580 aa).

TPR repeat units lie at residues 50–83 (IISF…LFKV), 107–140 (YELK…SRGL), 141–175 (DTHL…CPLC), 253–286 (VLEK…DPYY), 321–354 (AETW…KESH), 356–388 (FAHS…SKNI), 390–421 (TARE…SPDY), 422–456 (SKTM…SPHC), 458–490 (DTVL…QETD), and 491–523 (LMHT…NPQY). The disordered stretch occupies residues 539–580 (GIDPDQELDQENDDDDQEEGEGENDQEENDDDDNDDDDEYIS). Over residues 542-580 (PDQELDQENDDDDQEEGEGENDQEENDDDDNDDDDEYIS) the composition is skewed to acidic residues.

Belongs to the APC7 family. The APC/C is composed of at least 13 subunits that stay tightly associated throughout the cell cycle: anapc1, anapc2, anapc3, anapc4, anapc5, anapc6, anapc7, anapc8, anapc10, anapc11, cdc20, cdc26 and cdh1.

It is found in the nucleus. It participates in protein modification; protein ubiquitination. Component of the anaphase promoting complex/cyclosome (APC/C), a cell cycle-regulated E3 ubiquitin-protein ligase complex that controls progression through mitosis and the G1 phase of the cell cycle. This chain is Anaphase-promoting complex subunit 7 (anapc7), found in Dictyostelium discoideum (Social amoeba).